Consider the following 237-residue polypeptide: Cytosolic-abundant heat soluble protein 86272 (237 aa).

The disordered stretch occupies residues 96 to 125 (FKDQEKYSREQAAIARAHDKDLEKKTEEYR). Positions 111–125 (RAHDKDLEKKTEEYR) are enriched in basic and acidic residues. The stretch at 115 to 193 (KDLEKKTEEY…MNALEQSKMA (79 aa)) forms a coiled coil. CAHS motif stretches follow at residues 124–142 (YRKT…LEKQ) and 161–179 (QKRE…LEHE). The span at 204–215 (AGTTVSGGTTVS) shows a compositional bias: low complexity. Residues 204-237 (AGTTVSGGTTVSEHTEVHDGKEKKSLGEKIKSLF) are disordered. Residues 216–237 (EHTEVHDGKEKKSLGEKIKSLF) show a composition bias toward basic and acidic residues.

This sequence belongs to the Cytosolic-abundant heat soluble protein (CAHS) family.

The protein resides in the cytoplasm. Its function is as follows. CAHS proteins are cytosolic heat soluble proteins that seem to contribute to the anhydrobiosis in tardigrades, but their specific mechanisms are yet to be identified. It is possible that protection during anhydrobiosis might occur via the stabilization of vitrifying small molecules such as sugars, but not via the direct glass transition of CAHS proteins themselves. This chain is Cytosolic-abundant heat soluble protein 86272, found in Hypsibius exemplaris (Freshwater tardigrade).